A 355-amino-acid chain; its full sequence is UDP-N-acetylglucosamine--N-acetylmuramyl-(pentapeptide) pyrophosphoryl-undecaprenol N-acetylglucosamine transferase (355 aa).

Residues 15–17 (TGG), N127, R163, S191, I244, 263–268 (ALTVSE), and Q288 contribute to the UDP-N-acetyl-alpha-D-glucosamine site.

This sequence belongs to the glycosyltransferase 28 family. MurG subfamily.

It localises to the cell inner membrane. The catalysed reaction is di-trans,octa-cis-undecaprenyl diphospho-N-acetyl-alpha-D-muramoyl-L-alanyl-D-glutamyl-meso-2,6-diaminopimeloyl-D-alanyl-D-alanine + UDP-N-acetyl-alpha-D-glucosamine = di-trans,octa-cis-undecaprenyl diphospho-[N-acetyl-alpha-D-glucosaminyl-(1-&gt;4)]-N-acetyl-alpha-D-muramoyl-L-alanyl-D-glutamyl-meso-2,6-diaminopimeloyl-D-alanyl-D-alanine + UDP + H(+). It functions in the pathway cell wall biogenesis; peptidoglycan biosynthesis. Cell wall formation. Catalyzes the transfer of a GlcNAc subunit on undecaprenyl-pyrophosphoryl-MurNAc-pentapeptide (lipid intermediate I) to form undecaprenyl-pyrophosphoryl-MurNAc-(pentapeptide)GlcNAc (lipid intermediate II). This chain is UDP-N-acetylglucosamine--N-acetylmuramyl-(pentapeptide) pyrophosphoryl-undecaprenol N-acetylglucosamine transferase, found in Salmonella paratyphi A (strain ATCC 9150 / SARB42).